The primary structure comprises 364 residues: Envelope glycoprotein US27 (364 aa).

Topologically, residues 1–36 (MTTSTTTTTNIMLQVSNVTNHTLNSTEIYQLFEYTR) are virion surface. N-linked (GlcNAc...) asparagine; by host glycosylation is found at Asn17, Asn20, and Asn24. The chain crosses the membrane as a helical span at residues 37 to 57 (FGVWLMCIVGTFLNMLVITTI). Over 58–69 (LYYRRKKKSPSD) the chain is Intravirion. Residues 70–90 (TYICNLAVADLLIVVGLPFFL) traverse the membrane as a helical segment. At 91 to 103 (EYAKHHPKLSREV) the chain is on the virion surface side. The helical transmembrane segment at 104-124 (VCSGLNACFYICLFAGVCFLI) threads the bilayer. Residues 125–150 (NLSMDRYCVIVWGVELNRVRNNKRAT) lie on the Intravirion side of the membrane. Residues 151-171 (CWVVIFWILAALMGMPHYLMY) traverse the membrane as a helical segment. The Virion surface segment spans residues 172-188 (SHTNNECVGEFANETSG). Residues 189–209 (WFPVFLNTKVNICGYLAPIVL) form a helical membrane-spanning segment. The Intravirion portion of the chain corresponds to 210–234 (MAYTYNRMVRFIINYVGKWHMQTLH). A helical transmembrane segment spans residues 235–255 (VLLVVVVSFASFWFPFNLALF). Over 256-279 (LESIRLLSGTQNETLQTVITFCLY) the chain is Virion surface. A helical transmembrane segment spans residues 280-300 (VGQFLAYVRACLNPGIYILVG). Topologically, residues 301–364 (TQMRKDMWTT…MESGEEEFLL (64 aa)) are intravirion. Positions 344–364 (KRTHYDRKHAPMESGEEEFLL) are disordered.

It belongs to the G-protein coupled receptor 1 family. As to quaternary structure, heterodimerizes with US28.

It is found in the virion. The protein resides in the host cell membrane. In terms of biological role, plays an important role in spread of HCMV via the extracellular route. As a G-protein-coupled receptor (vGPCR), may activate signaling pathways important for virion assembly or egress processes. The polypeptide is Envelope glycoprotein US27 (US27) (Homo sapiens (Human)).